A 513-amino-acid chain; its full sequence is MQLNPSEISELIKSRISGLGAEAEVRNTGTVISVTDGICRVHGLSGVMQGEMLEFPGNTFGLALNLERDSVGAVVLGEYEHISEGDTVKCTGRILEVPVGKELLGRVVNTLGQPIDGKGPINAKETDVIEKVAPGVIARQSVSQPVQTGLKSIDAMVPIGRGQRELIIGDRQTGKTAVAVDAIINQKGKGVFCVYVAVGQKASTIANVVRKLEEHGAMEYTVVVAAAASDSAAMQYLAPYAGCTMGEYFRDRGEDALIVYDDLTKQAWAYRQVSLLLRRPPGREAYPGDVFYLHSRLLERAARVNADYVEKFTNGAVKGKTGSLTALPVIETQAGDVSAFVPTNVISITDGQIFLETDLFNAGIRPAINAGISVSRVGGAAQTKVVKNLSGGIRTDLAQYRELAAFAQFASDLDDATRKQLERGRRVTELLKQPQYQPLQVWQLAASLFAANNGFLDNVEVKDILPFEKGLHDHLKTKYADLINRIEETKQLSKEDEAALRAAVEDFKKSAAF.

169-176 is an ATP binding site; that stretch reads GDRQTGKT.

Belongs to the ATPase alpha/beta chains family. As to quaternary structure, F-type ATPases have 2 components, CF(1) - the catalytic core - and CF(0) - the membrane proton channel. CF(1) has five subunits: alpha(3), beta(3), gamma(1), delta(1), epsilon(1). CF(0) has three main subunits: a(1), b(2) and c(9-12). The alpha and beta chains form an alternating ring which encloses part of the gamma chain. CF(1) is attached to CF(0) by a central stalk formed by the gamma and epsilon chains, while a peripheral stalk is formed by the delta and b chains.

The protein localises to the cell inner membrane. The enzyme catalyses ATP + H2O + 4 H(+)(in) = ADP + phosphate + 5 H(+)(out). Its function is as follows. Produces ATP from ADP in the presence of a proton gradient across the membrane. The alpha chain is a regulatory subunit. This Cupriavidus necator (strain ATCC 17699 / DSM 428 / KCTC 22496 / NCIMB 10442 / H16 / Stanier 337) (Ralstonia eutropha) protein is ATP synthase subunit alpha.